The sequence spans 655 residues: MCKSRLPTVLSLTLIYISISIGFSVYFYVLMEAAYDQFSSMFESYTQTAVHLQSNSRTLKSDLSDYMQLLNYSRKFDESGEESVLRRHNITTPRVFYIDLNYTTALGAENRNLNMINFYAIPYRYVDLLDPFGNSIPVTGRTPATEYIDCSRDKKEKCIDSIPPFDGVLDCLSLDIHMQPWSRNNKSFNRPIIIWLGEVAGELWRLVAGGLIVIRANYRRGCYGFLCHHDQSLPYRNQGVNDVLHAIDWTIENARHFAGDISKITLAGHGASASLVEYIRLNHGHHLPLDKYIVMSANNFGSRDLYCSSNSNVMVTTARLLGMPPSPATESGKERSVYESVRYLSFVEPKLVMSKLYGLKAAFHPCPLSVNNRRASTFGIGFKTKNHTSSNCIRTANEQPVLFTNTLNEYHNFVYGSTVFTHARSETILRTIGDMLSRHFIESRLAYANSSTEKLIQQVNGQYNVVDGEFVDYDAFIRLLTDFAFIMPTVKMNEFTTECGGNSYHYVFDFGNSTHGDDLKMLTSSANDTSLTHFQRQLADGLGFILSKFVRRGYPVKKQDGWCPSTGLVAQIMEMNTKDENVVVKKSTEGVLIPLLNQSYVLHFHRVSVAKQKCYNRLGNVPFWNDLLKFHQSARRGWRDGDTGCARSKYLSEIV.

Residues 9–29 (VLSLTLIYISISIGFSVYFYV) traverse the membrane as a helical segment. Asparagine 71, asparagine 89, asparagine 101, asparagine 185, asparagine 386, asparagine 449, and asparagine 512 each carry an N-linked (GlcNAc...) asparagine; by host glycan. The active-site Charge relay system is the histidine 515. 2 N-linked (GlcNAc...) asparagine; by host glycosylation sites follow: asparagine 527 and asparagine 597.

Belongs to the type-B carboxylesterase/lipase family.

The protein resides in the membrane. It carries out the reaction a carboxylic ester + H2O = an alcohol + a carboxylate + H(+). The chain is Putative esterase from Noctuidae (owlet moths).